A 503-amino-acid polypeptide reads, in one-letter code: Anhydrotetracycline monooxygenase (503 aa).

It belongs to the PheA/TfdB FAD monooxygenase family. Requires FAD as cofactor.

The enzyme catalyses anhydrotetracycline + NADPH + O2 + H(+) = 5a,11a-dehydrotetracycline + NADP(+) + H2O. The protein operates within antibiotic biosynthesis; oxytetracycline biosynthesis. In terms of biological role, catalyzes hydroxylation of the anthracycline structure at position C-6 during the biosynthesis of oxytetracyline. The chain is Anhydrotetracycline monooxygenase from Streptomyces rimosus.